Reading from the N-terminus, the 76-residue chain is Large ribosomal subunit protein bL28 (76 aa).

The segment at 21-42 (RGKAKKEGGVGKHITKTSRRRQ) is disordered. A compositionally biased stretch (basic residues) spans 33-42 (HITKTSRRRQ).

The protein belongs to the bacterial ribosomal protein bL28 family.

This is Large ribosomal subunit protein bL28 from Halothermothrix orenii (strain H 168 / OCM 544 / DSM 9562).